The sequence spans 218 residues: Oxygen regulatory protein NreC (218 aa).

The Response regulatory domain maps to 2–119 (KIVIADDHAV…QLILAVRTVY (118 aa)). Position 53 is a 4-aspartylphosphate (D53). Residues 149–214 (SSDPFKILSK…ELVEYALKKK (66 aa)) enclose the HTH luxR-type domain. Positions 173–192 (NKDIAEKLFVSVKTVEAHKT) form a DNA-binding region, H-T-H motif.

In terms of processing, phosphorylated by NreB.

The protein localises to the cytoplasm. Functionally, member of the two-component regulatory system NreB/NreC involved in the control of dissimilatory nitrate/nitrite reduction in response to oxygen. Phosphorylated NreC binds to a GC-rich palindromic sequence at the promoters of the nitrate (narGHJI) and nitrite (nir) reductase operons, as well as the putative nitrate transporter gene narT, and activates their expression. The polypeptide is Oxygen regulatory protein NreC (nreC) (Staphylococcus epidermidis (strain ATCC 12228 / FDA PCI 1200)).